A 750-amino-acid chain; its full sequence is DDT domain-containing protein DDR4 (750 aa).

The interval 1 to 125 (MGSSSDIVPD…ITSLVPPPEP (125 aa)) is disordered. The segment covering 45-54 (RAQQRLQELQ) has biased composition (low complexity). Residues 55-77 (AAERKLKPPKKEYKREQHRRREE) are compositionally biased toward basic and acidic residues. Residues 78 to 100 (VVEEDEDSEDDDQEDEENDGDDE) are compositionally biased toward acidic residues. The 60-residue stretch at 133–192 (LRSMWELASVLNFLHVFRPLLKINAEFSAEEFETALLTPNDTLSDIHIPLLKAIPPVTRM) folds into the DDT domain. 2 disordered regions span residues 450-505 (NGRS…TDFV) and 532-750 (LKKR…TDNS). The span at 451–471 (GRSTSSTHPTEPVNDTASGRS) shows a compositional bias: polar residues. The span at 545 to 585 (EGDEEKGDEEYKWDEDNAEYEEEEEEEEEEDSLSASEEDSD) shows a compositional bias: acidic residues. Residues 595-606 (RRETKLRSRSND) show a composition bias toward basic and acidic residues. Over residues 688–707 (NADTTNGKENNQLNKSNGTT) the composition is skewed to polar residues. Positions 741–750 (LKDDDKTDNS) are enriched in basic and acidic residues.

As to quaternary structure, interacts (via the DDT domain) with CHR11 (via C-terminus).

Its subcellular location is the nucleus. Probable transcription regulator. The protein is DDT domain-containing protein DDR4 of Arabidopsis thaliana (Mouse-ear cress).